Consider the following 66-residue polypeptide: DNA gyrase inhibitor YacG (66 aa).

Cys9, Cys12, Cys28, and Cys32 together coordinate Zn(2+).

Belongs to the DNA gyrase inhibitor YacG family. In terms of assembly, interacts with GyrB. The cofactor is Zn(2+).

Inhibits all the catalytic activities of DNA gyrase by preventing its interaction with DNA. Acts by binding directly to the C-terminal domain of GyrB, which probably disrupts DNA binding by the gyrase. This is DNA gyrase inhibitor YacG from Pseudomonas fluorescens (strain Pf0-1).